We begin with the raw amino-acid sequence, 569 residues long: 2-succinyl-5-enolpyruvyl-6-hydroxy-3-cyclohexene-1-carboxylate synthase (569 aa).

This sequence belongs to the TPP enzyme family. MenD subfamily. Homodimer. Mg(2+) serves as cofactor. The cofactor is Mn(2+). It depends on thiamine diphosphate as a cofactor.

It catalyses the reaction isochorismate + 2-oxoglutarate + H(+) = 5-enolpyruvoyl-6-hydroxy-2-succinyl-cyclohex-3-ene-1-carboxylate + CO2. It participates in quinol/quinone metabolism; 1,4-dihydroxy-2-naphthoate biosynthesis; 1,4-dihydroxy-2-naphthoate from chorismate: step 2/7. It functions in the pathway cofactor biosynthesis; phylloquinone biosynthesis. Functionally, catalyzes the thiamine diphosphate-dependent decarboxylation of 2-oxoglutarate and the subsequent addition of the resulting succinic semialdehyde-thiamine pyrophosphate anion to isochorismate to yield 2-succinyl-5-enolpyruvyl-6-hydroxy-3-cyclohexene-1-carboxylate (SEPHCHC). The chain is 2-succinyl-5-enolpyruvyl-6-hydroxy-3-cyclohexene-1-carboxylate synthase from Microcystis aeruginosa (strain NIES-843 / IAM M-2473).